We begin with the raw amino-acid sequence, 382 residues long: Chaperone protein DnaJ (382 aa).

The region spanning 5–70 is the J domain; sequence DYYDLLGLSK…DKRAAYDRYG (66 aa). The CR-type zinc finger occupies 138–216; that stretch reads GTKVPINYVT…CSGSGRVRDE (79 aa). Residues Cys-151, Cys-154, Cys-168, Cys-171, Cys-190, Cys-193, Cys-204, and Cys-207 each contribute to the Zn(2+) site. CXXCXGXG motif repeat units lie at residues 151–158, 168–175, 190–197, and 204–211; these read CSSCSGSG, CNTCHGAG, CHVCNGEG, and CKKCSGSG.

Belongs to the DnaJ family. In terms of assembly, homodimer. Zn(2+) serves as cofactor.

The protein localises to the cytoplasm. Functionally, participates actively in the response to hyperosmotic and heat shock by preventing the aggregation of stress-denatured proteins and by disaggregating proteins, also in an autonomous, DnaK-independent fashion. Unfolded proteins bind initially to DnaJ; upon interaction with the DnaJ-bound protein, DnaK hydrolyzes its bound ATP, resulting in the formation of a stable complex. GrpE releases ADP from DnaK; ATP binding to DnaK triggers the release of the substrate protein, thus completing the reaction cycle. Several rounds of ATP-dependent interactions between DnaJ, DnaK and GrpE are required for fully efficient folding. Also involved, together with DnaK and GrpE, in the DNA replication of plasmids through activation of initiation proteins. This is Chaperone protein DnaJ from Ehrlichia ruminantium (strain Welgevonden).